The primary structure comprises 150 residues: Arginine repressor (150 aa).

Belongs to the ArgR family.

It localises to the cytoplasm. Its pathway is amino-acid biosynthesis; L-arginine biosynthesis [regulation]. Functionally, regulates arginine biosynthesis genes. This Clostridium acetobutylicum (strain ATCC 824 / DSM 792 / JCM 1419 / IAM 19013 / LMG 5710 / NBRC 13948 / NRRL B-527 / VKM B-1787 / 2291 / W) protein is Arginine repressor.